The sequence spans 365 residues: Probable 7-methylxanthine methyltransferase 4 (365 aa).

An S-adenosyl-L-homocysteine-binding site is contributed by Tyr18. A theobromine-binding site is contributed by Thr25. 6 residues coordinate S-adenosyl-L-homocysteine: Cys62, Gln67, Asp99, Leu100, Ser132, and Phe133. Theobromine contacts are provided by Tyr150, His153, and Trp154. Positions 170, 256, 258, and 259 each coordinate Mg(2+). Phe311 contacts theobromine.

This sequence belongs to the methyltransferase superfamily. Type-7 methyltransferase family. The cofactor is Mg(2+).

The catalysed reaction is 7-methylxanthine + S-adenosyl-L-methionine = theobromine + S-adenosyl-L-homocysteine + H(+). Its pathway is alkaloid biosynthesis. Involved in the biosynthesis of theobromine. This Theobroma cacao (Cacao) protein is Probable 7-methylxanthine methyltransferase 4.